The chain runs to 426 residues: Glutamate-1-semialdehyde 2,1-aminomutase (426 aa).

K265 is subject to N6-(pyridoxal phosphate)lysine.

This sequence belongs to the class-III pyridoxal-phosphate-dependent aminotransferase family. HemL subfamily. As to quaternary structure, homodimer. Pyridoxal 5'-phosphate serves as cofactor.

Its subcellular location is the cytoplasm. The enzyme catalyses (S)-4-amino-5-oxopentanoate = 5-aminolevulinate. It participates in porphyrin-containing compound metabolism; protoporphyrin-IX biosynthesis; 5-aminolevulinate from L-glutamyl-tRNA(Glu): step 2/2. The sequence is that of Glutamate-1-semialdehyde 2,1-aminomutase from Yersinia enterocolitica serotype O:8 / biotype 1B (strain NCTC 13174 / 8081).